The primary structure comprises 316 residues: Ninja-family protein 2 (316 aa).

2 disordered regions span residues 1 to 29 and 72 to 236; these read MASR…GEPD and TSDD…TSTG. Residues 99 to 108 are compositionally biased toward basic and acidic residues; the sequence is ERWRRREMQS. Residues 156-166 show a composition bias toward polar residues; the sequence is DQGNTSSSMPE. Composition is skewed to low complexity over residues 179-199 and 222-235; these read SSME…QNKS and LRTL…TTST.

Belongs to the Ninja family.

Its subcellular location is the nucleus. The polypeptide is Ninja-family protein 2 (AFP-B1) (Triticum aestivum (Wheat)).